Here is a 344-residue protein sequence, read N- to C-terminus: 4-dimethylallyltryptophan N-methyltransferase easF (344 aa).

It belongs to the methyltransferase superfamily. In terms of assembly, homodimer.

The catalysed reaction is 4-(3-methylbut-2-enyl)-L-tryptophan + S-adenosyl-L-methionine = 4-(3-methylbut-2-enyl)-L-abrine + S-adenosyl-L-homocysteine + H(+). It participates in alkaloid biosynthesis; ergot alkaloid biosynthesis. 4-dimethylallyltryptophan N-methyltransferase; part of the gene cluster that mediates the biosynthesis of fungal ergot alkaloid. DmaW catalyzes the first step of ergot alkaloid biosynthesis by condensing dimethylallyl diphosphate (DMAP) and tryptophan to form 4-dimethylallyl-L-tryptophan. The second step is catalyzed by the methyltransferase easF that methylates 4-dimethylallyl-L-tryptophan in the presence of S-adenosyl-L-methionine, resulting in the formation of 4-dimethylallyl-L-abrine. The catalase easC and the FAD-dependent oxidoreductase easE then transform 4-dimethylallyl-L-abrine to chanoclavine-I which is further oxidized by easD in the presence of NAD(+), resulting in the formation of chanoclavine-I aldehyde. Agroclavine dehydrogenase easG then mediates the conversion of chanoclavine-I aldehyde to agroclavine via a non-enzymatic adduct reaction: the substrate is an iminium intermediate that is formed spontaneously from chanoclavine-I aldehyde in the presence of glutathione. The presence of easA is not required to complete this reaction. Further conversion of agroclavine to paspalic acid is a two-step process involving oxidation of agroclavine to elymoclavine and of elymoclavine to paspalic acid, the second step being performed by the elymoclavine oxidase cloA. Paspalic acid is then further converted to D-lysergic acid. Ergopeptines are assembled from D-lysergic acid and three different amino acids by the D-lysergyl-peptide-synthetases composed each of a monomudular and a trimodular nonribosomal peptide synthetase subunit. LpsB and lpsC encode the monomodular subunits responsible for D-lysergic acid activation and incorporation into the ergopeptine backbone. LpsA1 and A2 subunits encode the trimodular nonribosomal peptide synthetase assembling the tripeptide portion of ergopeptines. LpsA1 is responsible for formation of the major ergopeptine, ergotamine, and lpsA2 for alpha-ergocryptine, the minor ergopeptine of the total alkaloid mixture elaborated by C.purpurea. D-lysergyl-tripeptides are assembled by the nonribosomal peptide synthetases and released as N-(D-lysergyl-aminoacyl)-lactams. Cyclolization of the D-lysergyl-tripeptides is performed by the Fe(2+)/2-ketoglutarate-dependent dioxygenase easH which introduces a hydroxyl group into N-(D-lysergyl-aminoacyl)-lactam at alpha-C of the aminoacyl residue followed by spontaneous condensation with the terminal lactam carbonyl group. This Claviceps purpurea (Ergot fungus) protein is 4-dimethylallyltryptophan N-methyltransferase easF.